We begin with the raw amino-acid sequence, 191 residues long: Adenylate kinase (191 aa).

10–15 (GAGKGT) lines the ATP pocket. The tract at residues 30–59 (STGDIFRANVTEGTPLGVEAKRYMDAGEYV) is NMP. AMP-binding positions include threonine 31, arginine 36, 57–59 (EYV), 85–88 (GYPR), and glutamine 92. The LID stretch occupies residues 126–136 (QRAQVEGRADD). ATP is bound at residue arginine 127. 2 residues coordinate AMP: arginine 133 and arginine 144. An ATP-binding site is contributed by glycine 172.

The protein belongs to the adenylate kinase family. As to quaternary structure, monomer.

The protein resides in the cytoplasm. It catalyses the reaction AMP + ATP = 2 ADP. The protein operates within purine metabolism; AMP biosynthesis via salvage pathway; AMP from ADP: step 1/1. Its function is as follows. Catalyzes the reversible transfer of the terminal phosphate group between ATP and AMP. Plays an important role in cellular energy homeostasis and in adenine nucleotide metabolism. The protein is Adenylate kinase of Nocardioides sp. (strain ATCC BAA-499 / JS614).